Consider the following 127-residue polypeptide: MQALLLVGAGGAAGAVARYLLGVQALRWLGPGWPYGTFAANILGGFLMGLLAGGLAHRGGAGQETWRLLLGVGALGGFTTFSAYSLEVALMIERRAYGQAFAYSLGSVALAVAALFAGLLLARRVFA.

4 helical membrane-spanning segments follow: residues 3-23 (ALLLVGAGGAAGAVARYLLGV), 36-56 (GTFAANILGGFLMGLLAGGLA), 72-92 (VGALGGFTTFSAYSLEVALMI), and 101-121 (FAYSLGSVALAVAALFAGLLL). Positions 76 and 79 each coordinate Na(+).

This sequence belongs to the fluoride channel Fluc/FEX (TC 1.A.43) family.

It localises to the cell inner membrane. It catalyses the reaction fluoride(in) = fluoride(out). With respect to regulation, na(+) is not transported, but it plays an essential structural role and its presence is essential for fluoride channel function. Fluoride-specific ion channel. Important for reducing fluoride concentration in the cell, thus reducing its toxicity. In Phenylobacterium zucineum (strain HLK1), this protein is Fluoride-specific ion channel FluC.